The primary structure comprises 1044 residues: Disease resistance protein PIK6-NP (1044 aa).

The segment at L3–V184 is structured coiled coil (CC) domain. One can recognise an NB-ARC domain in the interval K187 to Q543. The disordered stretch occupies residues Q258–M302. LRR repeat units lie at residues L635–Y657, M682–L705, and E706–L728. Positions G737–K771 are disordered. 6 LRR repeats span residues L808–S834, S840–M862, P866–I888, T889–N911, K935–S958, and M980–N1004.

It belongs to the disease resistance NB-LRR family.

Probable disease resistance protein. Resistance proteins guard the plant against pathogens that contain an appropriate avirulence protein via an indirect interaction with this avirulence protein. That triggers a defense system including the hypersensitive response, which restricts the pathogen growth. At the opposite of cultivar Kusabue, the cultivar Nipponbare doesn't recognize the effector avirulence protein AVR-Pik from M.oryzae. This Oryza sativa subsp. japonica (Rice) protein is Disease resistance protein PIK6-NP.